We begin with the raw amino-acid sequence, 302 residues long: Endochitinase 4 (302 aa).

The N-terminal stretch at 1–18 (EFTALSLLFSLLLLTASA) is a signal peptide. In terms of domain architecture, Chitin-binding type-1 spans 19–60 (EQCGKQAGGARCAAGLCCSNFGWCGNTNDYCGPGKCQSQCPS). Disulfide bonds link cysteine 21/cysteine 36, cysteine 30/cysteine 42, cysteine 35/cysteine 49, and cysteine 54/cysteine 58. The interval 59–79 (PSGPSPKPPTPGPGPSGGDIG) is disordered. Residues 61–72 (GPSPKPPTPGPG) show a composition bias toward pro residues. The active-site Proton donor is glutamate 144. Cysteine 162 and cysteine 182 are joined by a disulfide.

Belongs to the glycosyl hydrolase 19 family. Chitinase class I subfamily.

Its subcellular location is the vacuole. The catalysed reaction is Random endo-hydrolysis of N-acetyl-beta-D-glucosaminide (1-&gt;4)-beta-linkages in chitin and chitodextrins.. In terms of biological role, defense against chitin-containing fungal pathogens. In Solanum tuberosum (Potato), this protein is Endochitinase 4 (CHTB4).